The sequence spans 312 residues: Homoserine O-acetyltransferase (312 aa).

Cys142 serves as the catalytic Acyl-thioester intermediate. Substrate contacts are provided by Lys163 and Ser192. His235 acts as the Proton acceptor in catalysis. Glu237 is a catalytic residue. A substrate-binding site is contributed by Arg249.

Belongs to the MetA family.

It is found in the cytoplasm. It carries out the reaction L-homoserine + acetyl-CoA = O-acetyl-L-homoserine + CoA. It functions in the pathway amino-acid biosynthesis; L-methionine biosynthesis via de novo pathway; O-acetyl-L-homoserine from L-homoserine: step 1/1. Its function is as follows. Transfers an acetyl group from acetyl-CoA to L-homoserine, forming acetyl-L-homoserine. This is Homoserine O-acetyltransferase from Chelativorans sp. (strain BNC1).